A 35-amino-acid polypeptide reads, in one-letter code: Coenzyme PQQ synthesis protein A (35 aa).

The pyrroloquinoline quinone (Glu-Tyr) cross-link spans 16 to 20 (EINMY).

It belongs to the PqqA family.

It functions in the pathway cofactor biosynthesis; pyrroloquinoline quinone biosynthesis. Required for coenzyme pyrroloquinoline quinone (PQQ) biosynthesis. PQQ is probably formed by cross-linking a specific glutamate to a specific tyrosine residue and excising these residues from the peptide. The chain is Coenzyme PQQ synthesis protein A from Roseobacter denitrificans (strain ATCC 33942 / OCh 114) (Erythrobacter sp. (strain OCh 114)).